We begin with the raw amino-acid sequence, 296 residues long: Small ribosomal subunit biogenesis GTPase RsgA (296 aa).

A CP-type G domain is found at 63–224 (KNQLVRPMVA…IADTPGFSSY (162 aa)). Residues 112 to 115 (SKTD) and 167 to 175 (GQTGAGKST) contribute to the GTP site. Residues Cys248, Cys253, His255, and Cys261 each contribute to the Zn(2+) site.

It belongs to the TRAFAC class YlqF/YawG GTPase family. RsgA subfamily. Monomer. Associates with 30S ribosomal subunit, binds 16S rRNA. Zn(2+) serves as cofactor.

It localises to the cytoplasm. One of several proteins that assist in the late maturation steps of the functional core of the 30S ribosomal subunit. Helps release RbfA from mature subunits. May play a role in the assembly of ribosomal proteins into the subunit. Circularly permuted GTPase that catalyzes slow GTP hydrolysis, GTPase activity is stimulated by the 30S ribosomal subunit. The protein is Small ribosomal subunit biogenesis GTPase RsgA of Limosilactobacillus fermentum (strain NBRC 3956 / LMG 18251) (Lactobacillus fermentum).